A 175-amino-acid chain; its full sequence is Regenerating islet-derived protein 3-beta (175 aa).

The first 26 residues, 1–26 (MLPPTACSVMSWMLLSCLMLLSQVQG), serve as a signal peptide directing secretion. A propeptide spanning residues 27 to 37 (EDSLKNIPSAR) is cleaved from the precursor. 3 disulfides stabilise this stretch: Cys40–Cys51, Cys68–Cys171, and Cys146–Cys163. The 126-residue stretch at 47–172 (YGSYCYALFQ…CEVKLPYVCK (126 aa)) folds into the C-type lectin domain. Position 107 (His107) interacts with Zn(2+). Residues 114 to 116 (EPN) carry the EPN motif. A Zn(2+)-binding site is contributed by Glu121.

Forms a hexameric membrane-permeabilizing oligomeric pore on membrane phospholipids. The hexamer is formed by three dimers related by helical symmetry. Forms filaments, filamentation traps pore complexes and limits damage to host cells. Interacts with EXTL3. Proteolytic processing by trypsin removes an inhibitory N-terminal propeptide and is essential for peptidoglycan binding and antibacterial activity. In terms of tissue distribution, constitutively expressed in the small intestine, moderately in colon and at an extremely low level in healthy pancreas.

It is found in the secreted. Lipopolysaccharide inhibits pore-forming activity, explaining why is bactericidal for Gram-positive but not Gram-negative bacteria. Bactericidal C-type lectin which acts against several intestinal Gram-positive and Gram-negative bacteria. Lacks antibacterial activity against S.typhimurium. May play a role in protection against infection with S.enteritidis by inhibiting its translocation from the gut lumen into intestinal tissues and further extraintestinal tissues. Its function is as follows. Acts as a hormone in response to different stimuli. Secreted by different cell types to activate its receptor EXTL3 and induce cell specific signaling pathways. In pancreas, is able stimulate cell proliferation. The polypeptide is Regenerating islet-derived protein 3-beta (Mus musculus (Mouse)).